The chain runs to 168 residues: Chorismate pyruvate-lyase (168 aa).

The substrate site is built by Met-36, Arg-78, Leu-116, and Glu-157.

The protein belongs to the UbiC family. As to quaternary structure, monomer.

It is found in the cytoplasm. It carries out the reaction chorismate = 4-hydroxybenzoate + pyruvate. The protein operates within cofactor biosynthesis; ubiquinone biosynthesis. Functionally, removes the pyruvyl group from chorismate, with concomitant aromatization of the ring, to provide 4-hydroxybenzoate (4HB) for the ubiquinone pathway. The protein is Chorismate pyruvate-lyase of Yersinia enterocolitica serotype O:8 / biotype 1B (strain NCTC 13174 / 8081).